The sequence spans 173 residues: Ribosome maturation factor RimM (173 aa).

The PRC barrel domain maps to 95–169; that stretch reads EGSYYFKDIL…RIEVTLLEGL (75 aa).

It belongs to the RimM family. In terms of assembly, binds ribosomal protein uS19.

Its subcellular location is the cytoplasm. Its function is as follows. An accessory protein needed during the final step in the assembly of 30S ribosomal subunit, possibly for assembly of the head region. Essential for efficient processing of 16S rRNA. May be needed both before and after RbfA during the maturation of 16S rRNA. It has affinity for free ribosomal 30S subunits but not for 70S ribosomes. The sequence is that of Ribosome maturation factor RimM from Lactobacillus johnsonii (strain CNCM I-12250 / La1 / NCC 533).